The sequence spans 236 residues: Ribose-5-phosphate isomerase A (236 aa).

Residues 32–35 (TGST), 87–90 (DGSD), and 100–103 (KGGG) each bind substrate. The Proton acceptor role is filled by Glu109. Lys127 contributes to the substrate binding site.

This sequence belongs to the ribose 5-phosphate isomerase family. Homodimer.

It catalyses the reaction aldehydo-D-ribose 5-phosphate = D-ribulose 5-phosphate. The protein operates within carbohydrate degradation; pentose phosphate pathway; D-ribose 5-phosphate from D-ribulose 5-phosphate (non-oxidative stage): step 1/1. Functionally, catalyzes the reversible conversion of ribose-5-phosphate to ribulose 5-phosphate. The protein is Ribose-5-phosphate isomerase A of Haloquadratum walsbyi (strain DSM 16790 / HBSQ001).